Reading from the N-terminus, the 202-residue chain is Crustacean calcium-binding protein 23 (202 aa).

Position 1 is an N-acetylserine (serine 1). 4 consecutive EF-hand domains span residues 33-68, 69-104, 105-140, and 148-185; these read SGLL…FGLD, LSDG…EMTE, PRKK…KTHP, and TEDE…LSKA. Residues aspartate 84, glutamate 93, aspartate 118, aspartate 122, and aspartate 129 each contribute to the Ca(2+) site.

As to quaternary structure, monomer or disulfide-linked dimers. As to expression, striated muscle and brain.

Possibly acts as a regulatory protein and not as a calcium buffer or transport protein. The polypeptide is Crustacean calcium-binding protein 23 (Faxonius limosus (Spinycheek crayfish)).